A 315-amino-acid chain; its full sequence is DNA-directed RNA polymerase subunit alpha (315 aa).

Positions 1–228 (MLEIEKPKIE…EHFKLFMTLT (228 aa)) are alpha N-terminal domain (alpha-NTD). The alpha C-terminal domain (alpha-CTD) stretch occupies residues 245-315 (KEKVLEMTIE…LELGLKQSEE (71 aa)).

The protein belongs to the RNA polymerase alpha chain family. As to quaternary structure, homodimer. The RNAP catalytic core consists of 2 alpha, 1 beta, 1 beta' and 1 omega subunit. When a sigma factor is associated with the core the holoenzyme is formed, which can initiate transcription.

The enzyme catalyses RNA(n) + a ribonucleoside 5'-triphosphate = RNA(n+1) + diphosphate. Functionally, DNA-dependent RNA polymerase catalyzes the transcription of DNA into RNA using the four ribonucleoside triphosphates as substrates. The chain is DNA-directed RNA polymerase subunit alpha from Clostridium tetani (strain Massachusetts / E88).